Here is a 261-residue protein sequence, read N- to C-terminus: Lys-63-specific deubiquitinase BRCC36 (261 aa).

Residues 6–149 (VHIQGDAFLV…YTCFQSVQAQ (144 aa)) enclose the MPN domain. Residues His92, His94, and Asp105 each coordinate Zn(2+). Positions 92-105 (HSHPHITVWPSHVD) match the JAMM motif motif.

The protein belongs to the peptidase M67A family. BRCC36 subfamily. In terms of assembly, component of the BRCA1-A complex, at least composed of brca1, bard1, uimc1/rap80, abraxas1, brcc3/brcc36, babam2 and babam1/nba1. In the BRCA1-A complex, interacts directly with ABRAXAS1 and babam2. Component of the BRISC complex, at least composed of ABRAXAS2, brcc3/brcc36, babam2 and babam1/nba1. Within the complex, interacts directly with abraxas2. Both the BRCA1-A complex and the BRISC complex bind polyubiquitin. The cofactor is Zn(2+).

It is found in the nucleus. Its subcellular location is the cytoplasm. The protein resides in the cytoskeleton. The protein localises to the spindle pole. In terms of biological role, metalloprotease that specifically cleaves 'Lys-63'-linked polyubiquitin chains. Does not have activity toward 'Lys-48'-linked polyubiquitin chains. Component of the BRCA1-A complex, a complex that specifically recognizes 'Lys-63'-linked ubiquitinated histones H2A and H2AX at DNA lesions sites, leading to target the brca1-bard1 heterodimer to sites of DNA damage at double-strand breaks (DSBs). In the BRCA1-A complex, it specifically removes 'Lys-63'-linked ubiquitin on histones H2A and H2AX, antagonizing the rnf8-dependent ubiquitination at double-strand breaks (DSBs). Catalytic subunit of the BRISC complex, a multiprotein complex that specifically cleaves 'Lys-63'-linked ubiquitin in various substrates. Mediates the specific 'Lys-63'-specific deubiquitination associated with the COP9 signalosome complex (CSN), via the interaction of the BRISC complex with the CSN complex. The BRISC complex is required for normal mitotic spindle assembly and microtubule attachment to kinetochores via its role in deubiquitinating numa1. Plays a role in interferon signaling via its role in the deubiquitination of the interferon receptor ifnar1; deubiquitination increases ifnar1 activity by enhancing its stability and cell surface expression. Acts as a regulator of the NLRP3 inflammasome by mediating deubiquitination of nlrp3. Down-regulates the response to bacterial lipopolysaccharide (LPS) via its role in ifnar1 deubiquitination. The chain is Lys-63-specific deubiquitinase BRCC36 (brcc3) from Xenopus laevis (African clawed frog).